The following is a 281-amino-acid chain: Homoserine kinase (281 aa).

Residue Pro-83 to Ala-93 participates in ATP binding.

Belongs to the GHMP kinase family. Homoserine kinase subfamily.

The protein resides in the cytoplasm. It catalyses the reaction L-homoserine + ATP = O-phospho-L-homoserine + ADP + H(+). It functions in the pathway amino-acid biosynthesis; L-threonine biosynthesis; L-threonine from L-aspartate: step 4/5. Its function is as follows. Catalyzes the ATP-dependent phosphorylation of L-homoserine to L-homoserine phosphate. This is Homoserine kinase from Thermotoga petrophila (strain ATCC BAA-488 / DSM 13995 / JCM 10881 / RKU-1).